Reading from the N-terminus, the 270-residue chain is Hemin import ATP-binding protein HmuV (270 aa).

An ABC transporter domain is found at 5 to 242 (LEAEAATYSV…SLINRVFDIE (238 aa)). Residue 37 to 44 (GPNGAGKS) participates in ATP binding.

The protein belongs to the ABC transporter superfamily. Heme (hemin) importer (TC 3.A.1.14.5) family. As to quaternary structure, the complex is composed of two ATP-binding proteins (HmuV), two transmembrane proteins (HmuU) and a solute-binding protein (HmuT).

It is found in the cell inner membrane. Its function is as follows. Part of the ABC transporter complex HmuTUV involved in hemin import. Responsible for energy coupling to the transport system. This is Hemin import ATP-binding protein HmuV from Rhodopseudomonas palustris (strain BisA53).